A 399-amino-acid polypeptide reads, in one-letter code: Formate-dependent phosphoribosylglycinamide formyltransferase (399 aa).

Residues 22 to 23 and E82 each bind N(1)-(5-phospho-beta-D-ribosyl)glycinamide; that span reads EL. ATP is bound by residues R114, K155, 160-165, 195-198, and E203; these read SSGKGQ and EKMI. The ATP-grasp domain occupies 119-308; the sequence is RLAAETLHLL…EFALHVRAFL (190 aa). Mg(2+) is bound by residues E267 and E279. Residues D286, K355, and 362-363 each bind N(1)-(5-phospho-beta-D-ribosyl)glycinamide; that span reads RR.

It belongs to the PurK/PurT family. As to quaternary structure, homodimer.

It carries out the reaction N(1)-(5-phospho-beta-D-ribosyl)glycinamide + formate + ATP = N(2)-formyl-N(1)-(5-phospho-beta-D-ribosyl)glycinamide + ADP + phosphate + H(+). It functions in the pathway purine metabolism; IMP biosynthesis via de novo pathway; N(2)-formyl-N(1)-(5-phospho-D-ribosyl)glycinamide from N(1)-(5-phospho-D-ribosyl)glycinamide (formate route): step 1/1. Involved in the de novo purine biosynthesis. Catalyzes the transfer of formate to 5-phospho-ribosyl-glycinamide (GAR), producing 5-phospho-ribosyl-N-formylglycinamide (FGAR). Formate is provided by PurU via hydrolysis of 10-formyl-tetrahydrofolate. The sequence is that of Formate-dependent phosphoribosylglycinamide formyltransferase from Proteus mirabilis (strain HI4320).